Consider the following 180-residue polypeptide: Small ribosomal subunit protein uS4 (180 aa).

The S4 RNA-binding domain occupies 102-174 (RRLQTMLVRK…PARKLEQKEE (73 aa)). The interval 154 to 180 (VPFSPLANPEHPARKLEQKEETNEESA) is disordered. Basic and acidic residues predominate over residues 164–174 (HPARKLEQKEE).

This sequence belongs to the universal ribosomal protein uS4 family. Part of the 30S ribosomal subunit. Contacts protein S5. The interaction surface between S4 and S5 is involved in control of translational fidelity.

Its function is as follows. One of the primary rRNA binding proteins, it binds directly to 16S rRNA where it nucleates assembly of the body of the 30S subunit. With S5 and S12 plays an important role in translational accuracy. The chain is Small ribosomal subunit protein uS4 from Nanoarchaeum equitans (strain Kin4-M).